Consider the following 140-residue polypeptide: Ergosterol biosynthetic protein 28 homolog (140 aa).

4 consecutive transmembrane segments (helical) span residues 4 to 24 (FLNV…GNTL), 52 to 72 (TFGI…IDIH), 79 to 99 (ITLW…FVFG), and 105 to 125 (VGVL…LVGL).

It belongs to the ERG28 family.

The protein localises to the endoplasmic reticulum membrane. The chain is Ergosterol biosynthetic protein 28 homolog from Mus musculus (Mouse).